An 89-amino-acid polypeptide reads, in one-letter code: UPF0223 protein BCG9842_B1176 (89 aa).

Belongs to the UPF0223 family.

This chain is UPF0223 protein BCG9842_B1176, found in Bacillus cereus (strain G9842).